Here is a 295-residue protein sequence, read N- to C-terminus: Ribosomal RNA small subunit methyltransferase A (295 aa).

S-adenosyl-L-methionine is bound by residues Asn-29, Leu-31, Gly-56, Glu-77, Asp-102, and Asn-128.

The protein belongs to the class I-like SAM-binding methyltransferase superfamily. rRNA adenine N(6)-methyltransferase family. RsmA subfamily.

The protein localises to the cytoplasm. It catalyses the reaction adenosine(1518)/adenosine(1519) in 16S rRNA + 4 S-adenosyl-L-methionine = N(6)-dimethyladenosine(1518)/N(6)-dimethyladenosine(1519) in 16S rRNA + 4 S-adenosyl-L-homocysteine + 4 H(+). Its function is as follows. Specifically dimethylates two adjacent adenosines (A1518 and A1519) in the loop of a conserved hairpin near the 3'-end of 16S rRNA in the 30S particle. May play a critical role in biogenesis of 30S subunits. The sequence is that of Ribosomal RNA small subunit methyltransferase A from Listeria welshimeri serovar 6b (strain ATCC 35897 / DSM 20650 / CCUG 15529 / CIP 8149 / NCTC 11857 / SLCC 5334 / V8).